The primary structure comprises 307 residues: Reaction center protein M chain (307 aa).

A run of 3 helical transmembrane segments spans residues 52–78 (LGIAGTVSLAFGAAWFFTIGVWYWYQA), 110–139 (QGGVWQIASLFMAISVIAWWVRVYTRADQL), and 142–167 (GKHMAWAFLSAIWLWSVLGFWRPILM). Positions 181 and 201 each coordinate (7R,8Z)-bacteriochlorophyll b. The chain crosses the membrane as a helical span at residues 197-225 (YNPFHGLSIAALYGSALLFAMHGATILAV). Residues H218 and E233 each coordinate Fe cation. Residue W251 participates in a ubiquinone binding. Residues 259 to 285 (ATMEGIHRWAIWMAVMVTLTGGIGILL) traverse the membrane as a helical segment. H265 lines the Fe cation pocket.

It belongs to the reaction center PufL/M/PsbA/D family. Reaction center is composed of four bacteriochlorophylls, two bacteriopheophytins, two ubiquinones, one iron, and three highly hydrophobic polypeptide chains (designated L, M, and H).

It localises to the cellular chromatophore membrane. Its function is as follows. The reaction center is a membrane-bound complex that mediates the initial photochemical event in the electron transfer process of photosynthesis. This chain is Reaction center protein M chain (pufM), found in Rhodobacter capsulatus (Rhodopseudomonas capsulata).